Reading from the N-terminus, the 429-residue chain is MGKNVVVLGSQWGDEGKGKIVDLLTEKASAVARFQGGHNAGHTLVVDGKKTVLHLIPSGILRDDVTCFIGNGVVLSPEALLIEMKELEDNNVPVRERLKISPNCPLIMPYHIALDQAREAKRGSGKIGTTGRGIGPAYEDKVARRAIKLADLFRPDLEEKLRNLIEYHNFQLTQYYKVDAIDFDTTFALCQQWRDELKELVCDVTEALNQLRLAGKNLMFEGAQGTLLDIDHGTYPFVTSSSVTAGGVSTGTGIGPLYLDYVLGITKAYTTRVGSGPFPTELFDDVGAHLAKVGHEFGATTGRARRCGWFDAEALRRAVVLNSLSGICLTKLDVLDGLDEIRIGVGYDIPESEFAAAHDGEFYETVTPKYETLPGWKGSTVGITNYDDLPEEAKAYIKRIEQLIDCPVDIISTGPDRDETIVLRDPYDA.

GTP is bound by residues 13–19 (GDEGKGK) and 41–43 (GHT). Asp-14 serves as the catalytic Proton acceptor. Residues Asp-14 and Gly-41 each contribute to the Mg(2+) site. IMP is bound by residues 14-17 (DEGK), 39-42 (NAGH), Thr-130, Arg-144, Gln-224, Thr-239, and Arg-303. His-42 serves as the catalytic Proton donor. Substrate is bound at residue 299–305 (ATTGRAR). GTP is bound by residues Arg-305, 331–333 (KLD), and 412–414 (STG).

Belongs to the adenylosuccinate synthetase family. As to quaternary structure, homodimer. Mg(2+) serves as cofactor.

The protein resides in the cytoplasm. It carries out the reaction IMP + L-aspartate + GTP = N(6)-(1,2-dicarboxyethyl)-AMP + GDP + phosphate + 2 H(+). Its pathway is purine metabolism; AMP biosynthesis via de novo pathway; AMP from IMP: step 1/2. Functionally, plays an important role in the de novo pathway of purine nucleotide biosynthesis. Catalyzes the first committed step in the biosynthesis of AMP from IMP. The chain is Adenylosuccinate synthetase from Psychrobacter sp. (strain PRwf-1).